The following is a 268-amino-acid chain: Glucosamine-6-phosphate deaminase (268 aa).

Residue Asp-67 is the Proton acceptor; for enolization step of the active site. Residue Asn-137 is the For ring-opening step of the active site. The Proton acceptor; for ring-opening step role is filled by His-139. Residue Glu-144 is the For ring-opening step of the active site.

The protein belongs to the glucosamine/galactosamine-6-phosphate isomerase family. NagB subfamily. Homohexamer.

The catalysed reaction is alpha-D-glucosamine 6-phosphate + H2O = beta-D-fructose 6-phosphate + NH4(+). Its pathway is amino-sugar metabolism; N-acetylneuraminate degradation; D-fructose 6-phosphate from N-acetylneuraminate: step 5/5. Catalyzes the reversible isomerization-deamination of glucosamine 6-phosphate (GlcN6P) to form fructose 6-phosphate (Fru6P) and ammonium ion. This is Glucosamine-6-phosphate deaminase from Pseudoalteromonas translucida (strain TAC 125).